The primary structure comprises 206 residues: Putative acetyltransferase OgpAT (206 aa).

In terms of domain architecture, N-acetyltransferase spans 5-205; that stretch reads VVIRRATAAD…EVVVGRRLLD (201 aa). Residues 135 to 138, 144 to 148, 175 to 177, and H184 each bind acetyl-CoA; these read HIDL, GRGVG, and NPR.

It belongs to the acetyltransferase family. Monomer.

Functionally, binds acetyl-CoA, but not butyryl-CoA or decanoyl-CoA. May have acetyltransferase activity. The chain is Putative acetyltransferase OgpAT from Oceanicola granulosus (strain ATCC BAA-861 / DSM 15982 / KCTC 12143 / HTCC2516).